A 178-amino-acid polypeptide reads, in one-letter code: Sec-independent protein translocase protein TatB (178 aa).

Residues 2-22 traverse the membrane as a helical segment; that stretch reads LPEIGAAELLIIAAVALIVVG. Residues 104–178 form a disordered region; that stretch reads HSPTGYENTV…KARKTAGSAE (75 aa). The span at 114 to 131 shows a compositional bias: pro residues; sequence EPPPPEPEPQPAAEPAPK. Positions 141–154 are enriched in low complexity; it reads PKAAAAPKAAAKPK.

This sequence belongs to the TatB family. The Tat system comprises two distinct complexes: a TatABC complex, containing multiple copies of TatA, TatB and TatC subunits, and a separate TatA complex, containing only TatA subunits. Substrates initially bind to the TatABC complex, which probably triggers association of the separate TatA complex to form the active translocon.

It is found in the cell inner membrane. Its function is as follows. Part of the twin-arginine translocation (Tat) system that transports large folded proteins containing a characteristic twin-arginine motif in their signal peptide across membranes. Together with TatC, TatB is part of a receptor directly interacting with Tat signal peptides. TatB may form an oligomeric binding site that transiently accommodates folded Tat precursor proteins before their translocation. This Phenylobacterium zucineum (strain HLK1) protein is Sec-independent protein translocase protein TatB.